We begin with the raw amino-acid sequence, 99 residues long: NADH-ubiquinone oxidoreductase chain 4L (99 aa).

The next 3 membrane-spanning stretches (helical) occupy residues methionine 4 to serine 24, leucine 29 to phenylalanine 49, and phenylalanine 63 to isoleucine 83.

It belongs to the complex I subunit 4L family.

It is found in the mitochondrion membrane. The enzyme catalyses a ubiquinone + NADH + 5 H(+)(in) = a ubiquinol + NAD(+) + 4 H(+)(out). In terms of biological role, core subunit of the mitochondrial membrane respiratory chain NADH dehydrogenase (Complex I) that is believed to belong to the minimal assembly required for catalysis. Complex I functions in the transfer of electrons from NADH to the respiratory chain. The immediate electron acceptor for the enzyme is believed to be ubiquinone. The protein is NADH-ubiquinone oxidoreductase chain 4L (mt:ND4L) of Anopheles gambiae (African malaria mosquito).